A 385-amino-acid chain; its full sequence is Alanine racemase (385 aa).

Residue lysine 40 is the Proton acceptor; specific for D-alanine of the active site. Lysine 40 carries the post-translational modification N6-(pyridoxal phosphate)lysine. Substrate is bound at residue arginine 139. Catalysis depends on tyrosine 268, which acts as the Proton acceptor; specific for L-alanine. Methionine 315 contacts substrate.

It belongs to the alanine racemase family. Requires pyridoxal 5'-phosphate as cofactor.

It carries out the reaction L-alanine = D-alanine. Its pathway is amino-acid biosynthesis; D-alanine biosynthesis; D-alanine from L-alanine: step 1/1. In terms of biological role, catalyzes the interconversion of L-alanine and D-alanine. May also act on other amino acids. This chain is Alanine racemase (alr), found in Anoxybacillus flavithermus (strain DSM 21510 / WK1).